The primary structure comprises 582 residues: Colicin-E9 (582 aa).

Disordered regions lie at residues 1 to 74, 246 to 270, 294 to 321, 422 to 489, and 510 to 542; these read MSGG…SGGG, SPGV…NTRD, PDQV…EAAE, ADAA…IADK, and SKDP…QQVG. Over residues 20-35 the composition is skewed to gly residues; the sequence is INGGPTGIGVSGGASD. Residues 36–45 show a composition bias toward low complexity; it reads GSGWSSENNP. The span at 46-74 shows a compositional bias: gly residues; that stretch reads WGGGSGSGIHWGGGSGRGNGGGNGNSGGG. Composition is skewed to basic and acidic residues over residues 297 to 321, 430 to 453, and 465 to 476; these read VKQR…EAAE, QERR…ESKR, and PVGDKWLDDAGK. Positions 516 to 529 are enriched in low complexity; sequence SKNLNPSNKSSVSK. Zn(2+) contacts are provided by His550, His575, and His579.

Belongs to the colicin/pyosin nuclease family.

Its function is as follows. This plasmid-coded bactericidal protein is an endonuclease active on both single- and double-stranded DNA but with undefined specificity. Colicins are polypeptide toxins produced by and active against E.coli and closely related bacteria. This Escherichia coli protein is Colicin-E9 (col).